Consider the following 684-residue polypeptide: Threonine--tRNA ligase (684 aa).

Residues 1 to 64 form the TGS domain; it reads MTAPNPSSLV…ESDTEVEPVA (64 aa). The catalytic stretch occupies residues 261 to 567; the sequence is DHRKLGVELD…LTEHYAGAFP (307 aa). Positions 366, 417, and 544 each coordinate Zn(2+).

It belongs to the class-II aminoacyl-tRNA synthetase family. Homodimer. Zn(2+) serves as cofactor.

The protein localises to the cytoplasm. It carries out the reaction tRNA(Thr) + L-threonine + ATP = L-threonyl-tRNA(Thr) + AMP + diphosphate + H(+). Catalyzes the attachment of threonine to tRNA(Thr) in a two-step reaction: L-threonine is first activated by ATP to form Thr-AMP and then transferred to the acceptor end of tRNA(Thr). Also edits incorrectly charged L-seryl-tRNA(Thr). The protein is Threonine--tRNA ligase of Mycobacteroides abscessus (strain ATCC 19977 / DSM 44196 / CCUG 20993 / CIP 104536 / JCM 13569 / NCTC 13031 / TMC 1543 / L948) (Mycobacterium abscessus).